The chain runs to 317 residues: Secreted mono- and diacylglycerol lipase 3 (317 aa).

Positions 1–29 (MMFADDLVRMAVLRFITVALAAITNVANA) are cleaved as a signal peptide. Cysteines 61 and 310 form a disulfide. Asn-108 carries an N-linked (GlcNAc...) asparagine glycan. Ser-175 functions as the Nucleophile in the catalytic mechanism. N-linked (GlcNAc...) asparagine glycosylation is present at Asn-194. Asp-234 is a catalytic residue. The N-linked (GlcNAc...) asparagine glycan is linked to Asn-258. His-294 is an active-site residue.

It belongs to the AB hydrolase superfamily. Lipase family. Class 3 subfamily.

Its subcellular location is the secreted. It carries out the reaction a monoacylglycerol + H2O = glycerol + a fatty acid + H(+). The enzyme catalyses a diacylglycerol + H2O = a monoacylglycerol + a fatty acid + H(+). In terms of biological role, secreted mono- and diacylglycerol lipase involved in plant virulence. Has a substrate preference for p-nitrophenyl esters with a carbon chain length of C10 (p-nitrophenyl caprate). In Gibberella zeae (strain ATCC MYA-4620 / CBS 123657 / FGSC 9075 / NRRL 31084 / PH-1) (Wheat head blight fungus), this protein is Secreted mono- and diacylglycerol lipase 3.